The primary structure comprises 793 residues: Kinesin-like protein KIF3C (793 aa).

The 356-residue stretch at 10–365 folds into the Kinesin motor domain; that stretch reads ALKVVARCRP…LRFANRAKNI (356 aa). 97-104 contacts ATP; sequence GQTGTGKT. 3 disordered regions span residues 251-288, 395-423, and 756-793; these read ERQN…ERPK, EKRG…GYPE, and KVRK…ADHE. A compositionally biased stretch (gly residues) spans 270 to 284; sequence GGSGGGGGSGGGAGG. Residues 376–630 adopt a coiled-coil conformation; that stretch reads KDTLLREFQE…QNEQTRELKL (255 aa). The span at 399 to 413 shows a compositional bias: basic residues; that stretch reads MLGKRPRRKSSRGKK. The interval 631-793 is globular; sequence KYLIIENFIP…LRPATVADHE (163 aa).

The protein belongs to the TRAFAC class myosin-kinesin ATPase superfamily. Kinesin family. Kinesin II subfamily. In terms of assembly, heterodimer of KIF3A and KIF3C.

It localises to the cytoplasm. Its subcellular location is the cytoskeleton. In terms of biological role, microtubule-based anterograde translocator for membranous organelles. The sequence is that of Kinesin-like protein KIF3C (KIF3C) from Pongo abelii (Sumatran orangutan).